The following is a 553-amino-acid chain: Putative transport protein YidE (553 aa).

5 helical membrane-spanning segments follow: residues 4–24 (IALT…IGNI), 28–48 (GVGF…HFVD), 65–85 (FGLI…FFAS), 95–115 (LFAV…HKIF), and 158–178 (MSYA…MWLM). RCK C-terminal domains are found at residues 192–276 (KHES…VIGK) and 279–361 (DTSL…VVGN). A run of 5 helical transmembrane segments spans residues 371 to 391 (MLPV…PLFV), 403 to 425 (AGGP…LYWF), 437 to 457 (LGIV…FVNT), 464 to 484 (LSWI…VGLL), and 533 to 553 (LVMF…WGIG).

This sequence belongs to the AAE transporter (TC 2.A.81) family. YidE subfamily.

The protein resides in the cell membrane. The chain is Putative transport protein YidE from Salmonella arizonae (strain ATCC BAA-731 / CDC346-86 / RSK2980).